The following is a 455-amino-acid chain: Zinc finger and BTB domain-containing protein 8A.2 (455 aa).

The BTB domain maps to 24–92 (CDCHIMIDGH…MYSGKLNLSG (69 aa)). 2 consecutive C2H2-type zinc fingers follow at residues 299–321 (FKCP…LLCH) and 327–350 (YPCQ…RTIH).

It is found in the nucleus. Its function is as follows. May be involved in transcriptional regulation. The protein is Zinc finger and BTB domain-containing protein 8A.2 (zbtb8a.2) of Xenopus tropicalis (Western clawed frog).